A 158-amino-acid chain; its full sequence is UPF0178 protein Rpal_2485 (158 aa).

Belongs to the UPF0178 family.

In Rhodopseudomonas palustris (strain TIE-1), this protein is UPF0178 protein Rpal_2485.